The following is a 114-amino-acid chain: Protein ORF3 (114 aa).

Hydrophobic stretches follow at residues 6–22 (CALG…CLCC) and 33–53 (AVVG…GLIL). The segment at 28-68 (VSRLAAVVGGAAAVPAVVSGVTGLILSPSQSPIFIQPTPLP) is interaction with host HPX. Positions 72–114 (PLRPGLDLAFANQPGHLAPLGEIRPSAPPLPPVADLPQPGLRR) are homodimerization, and interaction with host AMBP/bikunin. Residues 91–114 (LGEIRPSAPPLPPVADLPQPGLRR) form a disordered region. Residues 95–104 (RPSAPPLPPV) form an interaction with host SRC, HCK, FYN, PIK3R3 and GRB2 region. The short motif at 96–99 (PSAP) is the PTAP/PSAP motif element.

It belongs to the hepevirus ORF3 protein family. Forms homooligomers. Interacts with host SRC, HCK, FYN, PIK3R3 and GRB2 (via SH3 domain); binding does not activate the kinases. Interacts with host AMBP/bikunin and AMBP/alpha-1-microglobulin peptides. Interacts with host HPX/hemopexin. Interacts (when phosphorylated) with capsid protein ORF2. Interacts with host TSG101; this interaction plays a role in viral release from the host cell. Interacts with host SIRPA; this interaction down-regulates the phosphorylation of host IRF3. Post-translationally, palmitoylated in the N-terminus.

Its subcellular location is the host endoplasmic reticulum membrane. It localises to the host cytoplasm. It is found in the host cytoskeleton. The protein resides in the virion. The protein localises to the host cell membrane. In terms of biological role, small multifunctional phosphoprotein involved in virion morphogenesis, egress and counteracting host innate immunity. Plays critical roles in the final steps of viral release by interacting with host TSG101, a member of the vacuolar protein-sorting pathway and using other cellular host proteins involved in vesicle formation pathway. Also acts as a viroporin and forms ion conductive pores allowing viral particle release. Impairs the generation of type I interferon by down-regulating host TLR3 and TLR7 as well as their downstream signaling pathways. Down-regulates the phosphorylation of host IRF3 via the interaction with host SIRP-alpha, thereby inhibiting IFN-I expression. Interacts with host microtubules. This chain is Protein ORF3, found in Hepatitis E virus genotype 2 (isolate Human/Mexico) (HEV-2).